Consider the following 961-residue polypeptide: Retinoblastoma-like protein homolog lin-35 (961 aa).

Disordered stretches follow at residues 1 to 43 (MPKR…PPAK) and 55 to 129 (GGVQ…TPPP). Residues 68–81 (ELTQMTIKQETEGN) show a composition bias toward polar residues. A compositionally biased stretch (acidic residues) spans 107–119 (GEDDDYEEDDADS). S714 is modified (phosphoserine; by CDK4). T719 bears the Phosphothreonine; by CDK4 mark.

It belongs to the retinoblastoma protein (RB) family. As to quaternary structure, component of the DRM complex, at least composed of lin-9, lin-35, lin-37, lin-52, lin-53, lin-54, dpl-1 and efl-1. Interacts with lin-53. Interacts (via C-terminus) with dpl-1 (via C-terminus) and efl-1 (via C-terminus). Interacts (via C-terminus) with lin-8. In terms of processing, phosphorylated by the cyclin dependent kinase cdk-4. Phosphorylation inhibits the transcriptional repressor activity of lin-35 and allows for progression through the G1 phase of the cell cycle during postembryonic development.

The protein localises to the nucleus. Key regulator of cell division which acts as a transcriptional repressor and negatively regulates cell cycle progression in its active unphosphorylated form, but allows cell cycle progression when phosphorylated. When unphosphorylated and in its active form, interacts with E2F transcription factors such as efl-1 to repress their transcriptional activity and negatively regulate the progression through the G1 phase of the cell cycle during postembryonic development. May furthermore act with cell cycle regulator cki-1 to negatively regulate cell cycle progression. Acts redundantly with lin-53, fzr-1 and lin-23 to control cell cycle progression by regulating the expression of G1 phase cyclins. In particular, negatively regulates the expression of the cyclin E homolog cye-1, which is essential for the G1/S phase transition. Regulates cell division in the intestinal lineage, repressing the expression of genes such as cdc-25.2, which are required for intestinal cells to transition from the karyokinesis cell cycle (also known as nuclear division) to endoreplication, a specific growth pathway in the intestinal epithelium required for feeding and gut development in growing larvae during the L1 stage molt. Its role as a transcriptional repressor in the regulation of intestinal cell division during postembryonic development is most likely in complex with an E2F cell cycle regulatory transcription factor efl-1 and its binding partner the synthetic multivulva class B protein dpl-1. Synthetic multivulva (synMuv) class B protein. SynMuv proteins are required to repress the induction of vulval development by Ras signaling and probably act by forming the multiprotein DRM complex that represses transcription. Together with synMuv class B protein lin-53, and redundantly with synMuv class A protein lin-15A, represses transcription to control vulval development, most likely through antagonization of the Ras-signaling pathway in the major hypodermal syncytium hyp7. Acts redundantly with the transcriptional corepressor spr-1 and the zinc finger protein zfp-2 to play a role in vulval morphogenesis, promote germline proliferation and somatic gonad development. Acts redundantly with ubc-18 in the regulation of pharyngeal morphogenesis during embryonic development by negatively regulating the expression of proteins such as sup-35. Functions with the SWI/SNF complex and proteins such as pha-1 to regulate larval development. Functions redundantly with xnp-1 to regulate somatic gonad development. Acts redundantly with slr-2 to regulate the expression of intestinal genes required for nutrient utilization. Regulates transcription in response to starvation. Furthermore, in response to starvation, promotes germ cell programmed cell death by negatively regulating the expression of the anti-apoptotic protein ced-9. Conversely, in conjunction with mcd-1, efl-1 and the synthetic multivulva class B proteins dpl-1, lin-37 and lin-52, may also regulate transcription to promote programmed cell death independently of ced-1, ced-8 and ced-9 cell death pathways. Directly involved in heterochromatin formation by maintaining overall chromatin structure and, in particular, that of constitutive heterochromatin by stabilizing histone methylation. In particular, negatively regulates the expression of mes-4, a histone methyltransferase that controls the expression of germline specific genes. May play a role in double strand break formation during meiosis. May suppress sensitivity to RNAi. May play a role in the response to endoplasmic reticulum (ER) stress. This chain is Retinoblastoma-like protein homolog lin-35, found in Caenorhabditis elegans.